Here is a 233-residue protein sequence, read N- to C-terminus: Large ribosomal subunit protein uL1 (233 aa).

This sequence belongs to the universal ribosomal protein uL1 family. As to quaternary structure, part of the 50S ribosomal subunit.

In terms of biological role, binds directly to 23S rRNA. The L1 stalk is quite mobile in the ribosome, and is involved in E site tRNA release. Its function is as follows. Protein L1 is also a translational repressor protein, it controls the translation of the L11 operon by binding to its mRNA. This is Large ribosomal subunit protein uL1 from Polynucleobacter asymbioticus (strain DSM 18221 / CIP 109841 / QLW-P1DMWA-1) (Polynucleobacter necessarius subsp. asymbioticus).